The chain runs to 286 residues: uncharacterized protein (286 aa).

6 consecutive transmembrane segments (helical) span residues 52 to 74 (ILWTIIVANGAILFTAHYVLIGL), 79 to 101 (LIAIFVVMLSGVMLYAPLAFLFL), 142 to 161 (WWDPLLVGFFWIAAGFVSFF), 168 to 190 (VLVFLLLIAPLALLSVKCPGAIL), 203 to 225 (IQATFLVKLAVLIFASLAAVALV), and 257 to 276 (IIWIAWIMLTSLGLLIASFM).

It localises to the cell membrane. This is an uncharacterized protein from Archaeoglobus fulgidus (strain ATCC 49558 / DSM 4304 / JCM 9628 / NBRC 100126 / VC-16).